Here is a 922-residue protein sequence, read N- to C-terminus: uncharacterized protein (922 aa).

5 disordered regions span residues 459 to 522 (SLQD…QPKN), 539 to 627 (SNSA…SSLG), 649 to 668 (GFSS…RQPF), 692 to 835 (QKLD…VTSL), and 856 to 879 (PWRK…RPER). The segment covering 546–567 (KAKHSSNKPHKAASSRISKTKS) has biased composition (basic residues). Positions 582 to 600 (KKSEESKQSGKKVKVEEKQ) are enriched in basic and acidic residues. Residues 651 to 660 (SSSRTLGSSS) show a composition bias toward low complexity. The span at 692-702 (QKLDGSAEKEC) shows a compositional bias: basic and acidic residues. 2 stretches are compositionally biased toward polar residues: residues 755–779 (DSTN…SLTG) and 790–824 (KATQ…SSLQ). A coiled-coil region spans residues 872–899 (TEEQRPEREAMKRKAQQERENAAKYTSL).

This is an uncharacterized protein from Homo sapiens (Human).